We begin with the raw amino-acid sequence, 251 residues long: Probable transcriptional regulatory protein Blon_1155/BLIJ_1182 (251 aa).

Belongs to the TACO1 family.

The protein resides in the cytoplasm. This Bifidobacterium longum subsp. infantis (strain ATCC 15697 / DSM 20088 / JCM 1222 / NCTC 11817 / S12) protein is Probable transcriptional regulatory protein Blon_1155/BLIJ_1182.